Reading from the N-terminus, the 499-residue chain is Serine/threonine-protein phosphatase 5 (499 aa).

The disordered stretch occupies residues 1 to 23 (MAMAEGERTECAEPPRDEPPADG). The residue at position 2 (Ala-2) is an N-acetylalanine. TPR repeat units follow at residues 28 to 61 (AEELKTQANDYFKAKDYENAIKFYSQAIELNPSN), 62 to 95 (AIYYGNRSLAYLRTECYGYALGDATRAIELDKKY), and 96 to 129 (IKGYYRRAASNMALGKFRAALRDYETVVKVKPHD). The interval 184 to 499 (GKVTISFMKE…ANTLLQLGMM (316 aa)) is catalytic. Residues Asp-242, His-244, and Asp-271 each contribute to the Mn(2+) site. His-244 is a binding site for substrate. Substrate-binding positions include Arg-275 and 303–304 (NH). A Mn(2+)-binding site is contributed by Asn-303. His-304 (proton donor/acceptor) is an active-site residue. His-352 contributes to the Mn(2+) binding site. Substrate is bound by residues Arg-400 and His-427. A Mn(2+)-binding site is contributed by His-427. Residues 495-499 (QLGMM) are required for autoinhibition.

Belongs to the PPP phosphatase family. PP-5 (PP-T) subfamily. In terms of assembly, probably forms a complex composed of chaperones HSP90 and HSP70, co-chaperones STIP1/HOP, CDC37, PPP5C, PTGES3/p23, TSC1 and client protein TSC2. Probably forms a complex composed of chaperones HSP90 and HSP70, co-chaperones CDC37, PPP5C, TSC1 and client protein TSC2, CDK4, AKT, RAF1 and NR3C1; this complex does not contain co-chaperones STIP1/HOP and PTGES3/p23. Part of a complex with HSP90/HSP90AA1 and steroid receptors. Interacts (via TPR repeats) with HSP90AA1 (via TPR repeat-binding motif) or HSPA1A/HSPA1B; the interaction is direct and activates the phosphatase activity. Dissociates from HSPA1A/HSPA1B and HSP90AA1 in response to arachidonic acid. Interacts with CPNE1 (via VWFA domain). Interacts with CDC16, CDC27. Interacts with KLHDC10 (via the 6 Kelch repeats); inhibits the phosphatase activity on MAP3K5. Interacts with ATM and ATR; both interactions are induced by DNA damage and enhance ATM and ATR kinase activity. Interacts with RAD17; reduced by DNA damage. Interacts with nuclear receptors such as NR3C1/GCR and PPARG (activated by agonist); regulates their transactivation activities. Interacts (via TPR repeats) with S100 proteins S100A1, S100A2, S100A6, S100B and S100P; the interactions are calcium-dependent, strongly activate PPP5C phosphatase activity and compete with HSP90AA1 and MAP3K5 interactions. Interacts with SMAD2 and SMAD3 but not with SMAD1; decreases SMAD3 phosphorylation and protein levels. Interacts (via TPR repeats) with CRY1 and CRY2; the interaction with CRY2 down-regulates the phosphatase activity on CSNK1E. Interacts (via TPR repeats) with the active form of RAC1, GNA12 or GNA13; these interactions activate the phosphatase activity and translocate PPP5C to the cell membrane. Interacts with FLCN. Requires Mg(2+) as cofactor. Mn(2+) serves as cofactor. Activated by at least two different proteolytic cleavages producing a 56 kDa and a 50 kDa form. Ubiquitous.

It localises to the nucleus. Its subcellular location is the cytoplasm. The protein resides in the cell membrane. It catalyses the reaction O-phospho-L-seryl-[protein] + H2O = L-seryl-[protein] + phosphate. The catalysed reaction is O-phospho-L-threonyl-[protein] + H2O = L-threonyl-[protein] + phosphate. Its activity is regulated as follows. Autoinhibited. In the autoinhibited state, the TPR domain interacts with the catalytic region and prevents substrate access to the catalytic pocket. Allosterically activated by various polyunsaturated fatty acids, free long-chain fatty-acids and long-chain fatty acyl-CoA esters, arachidonic acid being the most effective activator. HSP90A and probably RAC1, GNA12 and GNA13 can also release the autoinhibition by the TPR repeat. Activation by RAC1, GNA12 and GNA13 is synergistic with the one produced by fatty acids binding. Inhibited by okadaic acid. Its function is as follows. Serine/threonine-protein phosphatase that dephosphorylates a myriad of proteins involved in different signaling pathways including the kinases CSNK1E, ASK1/MAP3K5, PRKDC and RAF1, the nuclear receptors NR3C1, PPARG, ESR1 and ESR2, SMAD proteins and TAU/MAPT. Implicated in wide ranging cellular processes, including apoptosis, differentiation, DNA damage response, cell survival, regulation of ion channels or circadian rhythms, in response to steroid and thyroid hormones, calcium, fatty acids, TGF-beta as well as oxidative and genotoxic stresses. Participates in the control of DNA damage response mechanisms such as checkpoint activation and DNA damage repair through, for instance, the regulation ATM/ATR-signaling and dephosphorylation of PRKDC and TP53BP1. Inhibits ASK1/MAP3K5-mediated apoptosis induced by oxidative stress. Plays a positive role in adipogenesis, mainly through the dephosphorylation and activation of PPARG transactivation function. Also dephosphorylates and inhibits the anti-adipogenic effect of NR3C1. Regulates the circadian rhythms, through the dephosphorylation and activation of CSNK1E. May modulate TGF-beta signaling pathway by the regulation of SMAD3 phosphorylation and protein expression levels. Dephosphorylates and may play a role in the regulation of TAU/MAPT. Through their dephosphorylation, may play a role in the regulation of ions channels such as KCNH2. Dephosphorylate FNIP1, disrupting interaction with HSP90AA1/Hsp90. This is Serine/threonine-protein phosphatase 5 (PPP5C) from Homo sapiens (Human).